The chain runs to 264 residues: S-adenosylmethionine decarboxylase proenzyme (264 aa).

The Schiff-base intermediate with substrate; via pyruvic acid role is filled by Ser-113. Ser-113 carries the post-translational modification Pyruvic acid (Ser); by autocatalysis. His-118 serves as the catalytic Proton acceptor; for processing activity. Residue Cys-141 is the Proton donor; for catalytic activity of the active site.

This sequence belongs to the prokaryotic AdoMetDC family. Type 2 subfamily. Heterooctamer of four alpha and four beta chains arranged as a tetramer of alpha/beta heterodimers. Pyruvate serves as cofactor. Post-translationally, is synthesized initially as an inactive proenzyme. Formation of the active enzyme involves a self-maturation process in which the active site pyruvoyl group is generated from an internal serine residue via an autocatalytic post-translational modification. Two non-identical subunits are generated from the proenzyme in this reaction, and the pyruvate is formed at the N-terminus of the alpha chain, which is derived from the carboxyl end of the proenzyme. The post-translation cleavage follows an unusual pathway, termed non-hydrolytic serinolysis, in which the side chain hydroxyl group of the serine supplies its oxygen atom to form the C-terminus of the beta chain, while the remainder of the serine residue undergoes an oxidative deamination to produce ammonia and the pyruvoyl group blocking the N-terminus of the alpha chain.

The catalysed reaction is S-adenosyl-L-methionine + H(+) = S-adenosyl 3-(methylsulfanyl)propylamine + CO2. The protein operates within amine and polyamine biosynthesis; S-adenosylmethioninamine biosynthesis; S-adenosylmethioninamine from S-adenosyl-L-methionine: step 1/1. Its function is as follows. Catalyzes the decarboxylation of S-adenosylmethionine to S-adenosylmethioninamine (dcAdoMet), the propylamine donor required for the synthesis of the polyamines spermine and spermidine from the diamine putrescine. The sequence is that of S-adenosylmethionine decarboxylase proenzyme from Xanthomonas oryzae pv. oryzae (strain MAFF 311018).